Reading from the N-terminus, the 285-residue chain is Urease accessory protein UreD (285 aa).

Belongs to the UreD family. UreD, UreF and UreG form a complex that acts as a GTP-hydrolysis-dependent molecular chaperone, activating the urease apoprotein by helping to assemble the nickel containing metallocenter of UreC. The UreE protein probably delivers the nickel.

It localises to the cytoplasm. Functionally, required for maturation of urease via the functional incorporation of the urease nickel metallocenter. This Methylobacillus flagellatus (strain ATCC 51484 / DSM 6875 / VKM B-1610 / KT) protein is Urease accessory protein UreD.